The following is a 342-amino-acid chain: DNA-directed RNA polymerase subunit alpha (342 aa).

Positions 1–239 (MTTFLAKNWS…DQLQVFINFQ (239 aa)) are alpha N-terminal domain (alpha-NTD). Positions 254-342 (INPVLLKKVY…SLAKKHEDQY (89 aa)) are alpha C-terminal domain (alpha-CTD).

The protein belongs to the RNA polymerase alpha chain family. Homodimer. The RNAP catalytic core consists of 2 alpha, 1 beta, 1 beta' and 1 omega subunit. When a sigma factor is associated with the core the holoenzyme is formed, which can initiate transcription.

It carries out the reaction RNA(n) + a ribonucleoside 5'-triphosphate = RNA(n+1) + diphosphate. DNA-dependent RNA polymerase catalyzes the transcription of DNA into RNA using the four ribonucleoside triphosphates as substrates. This Orientia tsutsugamushi (strain Ikeda) (Rickettsia tsutsugamushi) protein is DNA-directed RNA polymerase subunit alpha.